A 151-amino-acid chain; its full sequence is Large ribosomal subunit protein uL13 (151 aa).

This sequence belongs to the universal ribosomal protein uL13 family. Part of the 50S ribosomal subunit.

In terms of biological role, this protein is one of the early assembly proteins of the 50S ribosomal subunit, although it is not seen to bind rRNA by itself. It is important during the early stages of 50S assembly. This chain is Large ribosomal subunit protein uL13, found in Petrotoga mobilis (strain DSM 10674 / SJ95).